Consider the following 592-residue polypeptide: Arginine--tRNA ligase (592 aa).

Positions 123-133 match the 'HIGH' region motif; the sequence is PNTNKPLHLGH.

This sequence belongs to the class-I aminoacyl-tRNA synthetase family. As to quaternary structure, monomer.

It localises to the cytoplasm. It catalyses the reaction tRNA(Arg) + L-arginine + ATP = L-arginyl-tRNA(Arg) + AMP + diphosphate. The chain is Arginine--tRNA ligase from Flavobacterium johnsoniae (strain ATCC 17061 / DSM 2064 / JCM 8514 / BCRC 14874 / CCUG 350202 / NBRC 14942 / NCIMB 11054 / UW101) (Cytophaga johnsonae).